The primary structure comprises 446 residues: Thymidine phosphorylase (446 aa).

Belongs to the thymidine/pyrimidine-nucleoside phosphorylase family. In terms of assembly, homodimer.

The enzyme catalyses thymidine + phosphate = 2-deoxy-alpha-D-ribose 1-phosphate + thymine. It participates in pyrimidine metabolism; dTMP biosynthesis via salvage pathway; dTMP from thymine: step 1/2. The enzymes which catalyze the reversible phosphorolysis of pyrimidine nucleosides are involved in the degradation of these compounds and in their utilization as carbon and energy sources, or in the rescue of pyrimidine bases for nucleotide synthesis. In Idiomarina loihiensis (strain ATCC BAA-735 / DSM 15497 / L2-TR), this protein is Thymidine phosphorylase.